The following is a 258-amino-acid chain: MGSRRYDSRTTIFSPEGRLYQVEYALESISHAGTAIGIMASDGIVLAAERKVTSTLLEQDTSTEKLYKLNDKIAVAVAGLTADAEILINTARIHAQNYLKTYNEDIPVEILVRRLSDIKQGYTQHGGLRPFGVSFIYAGYDDRYGYQLYTSNPSGNYTGWKAISVGANTSAAQTLLQMDYKDDMKVDDAIELALKTLSKTTDSSALTYDRLEFATIRKGANDGEVYQKIFKPQEIKDILVKTGITKKDEDEEADEDMK.

Residues K100, K199, and K231 each participate in a glycyl lysine isopeptide (Lys-Gly) (interchain with G-Cter in ubiquitin) cross-link.

The protein belongs to the peptidase T1A family. The 26S proteasome consists of a 20S proteasome core and two 19S regulatory subunits. The 20S proteasome core is composed of 28 subunits that are arranged in four stacked rings, resulting in a barrel-shaped structure. The two end rings are each formed by seven alpha subunits, and the two central rings are each formed by seven beta subunits. The catalytic chamber with the active sites is on the inside of the barrel.

Its subcellular location is the cytoplasm. It is found in the nucleus. Its function is as follows. The proteasome degrades poly-ubiquitinated proteins in the cytoplasm and in the nucleus. It is essential for the regulated turnover of proteins and for the removal of misfolded proteins. The proteasome is a multicatalytic proteinase complex that is characterized by its ability to cleave peptides with Arg, Phe, Tyr, Leu, and Glu adjacent to the leaving group at neutral or slightly basic pH. It has an ATP-dependent proteolytic activity. This Saccharomyces cerevisiae (strain ATCC 204508 / S288c) (Baker's yeast) protein is Proteasome subunit alpha type-3 (PRE9).